The primary structure comprises 349 residues: Threonine-rich protein (349 aa).

The N-terminal stretch at 1–19 is a signal peptide; the sequence is MKGLTLACIAATVVAASHA. Asn257 carries an N-linked (GlcNAc...) asparagine glycan. The disordered stretch occupies residues 300-326; the sequence is QPDVSPMSVRKRRQAESAEEDDDLVGD. Residues 316–326 are compositionally biased toward acidic residues; that stretch reads SAEEDDDLVGD. Residues 316–349 are a coiled coil; it reads SAEEDDDLVGDMEDLKELEQEIQEALEEVEKLDV.

Component of the acid-insoluble and acid-soluble organic matrix of calcified layers of the shell (at protein level).

Its subcellular location is the secreted. This chain is Threonine-rich protein, found in Lottia gigantea (Giant owl limpet).